A 1342-amino-acid polypeptide reads, in one-letter code: Subtilisin-like protease 2 (1342 aa).

The signal sequence occupies residues 1–18 (MLNIIYVVSLILIKFIFY). Residues 19–687 (KECNNNNNYY…KLYNNKYSFL (669 aa)) constitute a propeptide, inhibition peptide. 2 disordered regions span residues 85-111 (EKKT…ENEI) and 143-171 (ADVS…NYKN). N-linked (GlcNAc...) asparagine glycosylation is found at Asn-165, Asn-343, Asn-451, Asn-455, and Asn-493. The disordered stretch occupies residues 415–474 (KKSKKEKENTQQKGGNNPNVDINILNNNNNNNNNNNNNSNNNSNSMNDEEINYNNNNNKE). Residues 430–474 (NNPNVDINILNNNNNNNNNNNNNSNNNSNSMNDEEINYNNNNNKE) show a composition bias toward low complexity. The tract at residues 500 to 531 (IYHNKNDNSYKNKKEGTGKNNDNNDPNNNNNK) is disordered. The span at 503 to 516 (NKNDNSYKNKKEGT) shows a compositional bias: basic and acidic residues. Residues 518–531 (KNNDNNDPNNNNNK) show a composition bias toward low complexity. Asn-551, Asn-642, and Asn-729 each carry an N-linked (GlcNAc...) asparagine glycan. Residues 688–1137 (NKFLNIEPLI…LYNLYEYDSH (450 aa)) are Extracellular-facing. One can recognise a Peptidase S8 domain in the interval 727-1020 (TWNLSIIRVF…DSLVNAEGAV (294 aa)). Catalysis depends on charge relay system residues Asp-755 and His-798. Asn-821, Asn-857, Asn-893, and Asn-951 each carry an N-linked (GlcNAc...) asparagine glycan. Catalysis depends on Ser-961, which acts as the Charge relay system. N-linked (GlcNAc...) asparagine glycans are attached at residues Asn-1010 and Asn-1106. The chain crosses the membrane as a helical span at residues 1138 to 1158 (YLLASVILFFLALLSIFVGMI). At 1159-1342 (YMKSRKHSDK…MNQLDDMFMK (184 aa)) the chain is on the cytoplasmic side.

This sequence belongs to the peptidase S8 family. Post-translationally, proteolytically cleaved at the N-terminus to generate a 74kDa intermediate which is further processed into a 72kDa form. The first maturation cleavage is autocatalytic, occurs in the ER and is necessary for the subsequent SUB2 trafficking to the microneme. The second cleavage may be mediated by PMX/plasmepsin X.

The protein resides in the cell membrane. Its subcellular location is the cytoplasmic vesicle. It localises to the secretory vesicle. The protein localises to the microneme membrane. The catalysed reaction is Hydrolysis of proteins with broad specificity for peptide bonds, and a preference for a large uncharged residue in P1. Hydrolyzes peptide amides.. Its activity is regulated as follows. Activation may be calcium-dependent. Inhibited by the non-covalent interaction with the cleaved propeptide. In terms of biological role, serine protease which plays an essential role in the shedding of AMA1, MSP1 and MSP7 from the surface of the invading merozoite; this step is essential for productive invasion and the release of the adhesion between the erythrocyte and the merozoite. May cleave TRAMP/PTTRAMP, thereby shedding TRAMP from the merozoite surface during erythrocyte invasion. The protein is Subtilisin-like protease 2 of Plasmodium falciparum.